Here is a 296-residue protein sequence, read N- to C-terminus: MTFKYHKVAIVGKHYKKEVSQMVETLYAYLQQQGLEIIIENDTAADTSLVNVAIASLKEIALRCDVAIVVGGDGNFLKASRLLALYSNIPVIGINKGKLGFLTTLAADDNALKNDLYAILKGDSSVTKMSMLKYRVDNNLRAPLEASIALNEIAITASRGLMFGLKVFIDGRYAFDQRGDGLIVSTPTGSTAHAMSAGGPILNPNQNSVVLVPICSHSLNSRPLVISDESVIDIYITDYNDPESVLSIDGRHDTILKAHQKVTIQKARKKVTVLHTKDYNYYDTLREKLGWSKVLF.

Catalysis depends on D73, which acts as the Proton acceptor. Residues 73 to 74 (DG), K78, 151 to 152 (NE), R178, D180, and 191 to 196 (TAHAMS) each bind NAD(+).

The protein belongs to the NAD kinase family. It depends on a divalent metal cation as a cofactor.

It localises to the cytoplasm. The catalysed reaction is NAD(+) + ATP = ADP + NADP(+) + H(+). Its function is as follows. Involved in the regulation of the intracellular balance of NAD and NADP, and is a key enzyme in the biosynthesis of NADP. Catalyzes specifically the phosphorylation on 2'-hydroxyl of the adenosine moiety of NAD to yield NADP. The chain is NAD kinase from Francisella tularensis subsp. tularensis (strain FSC 198).